The primary structure comprises 320 residues: Cytochrome f (320 aa).

Positions 1 to 35 (MQTRNAFSYIKEEITRSISVLLVIYIIIRAPISNA) are cleaved as a signal peptide. Tyr36, Cys56, Cys59, and His60 together coordinate heme. The helical transmembrane segment at 286–305 (VQGLLFFLASIIFAQIFLVL) threads the bilayer.

It belongs to the cytochrome f family. The 4 large subunits of the cytochrome b6-f complex are cytochrome b6, subunit IV (17 kDa polypeptide, petD), cytochrome f and the Rieske protein, while the 4 small subunits are PetG, PetL, PetM and PetN. The complex functions as a dimer. Heme serves as cofactor.

The protein localises to the plastid. Its subcellular location is the chloroplast thylakoid membrane. In terms of biological role, component of the cytochrome b6-f complex, which mediates electron transfer between photosystem II (PSII) and photosystem I (PSI), cyclic electron flow around PSI, and state transitions. The chain is Cytochrome f from Lotus japonicus (Lotus corniculatus var. japonicus).